We begin with the raw amino-acid sequence, 183 residues long: Hypoxanthine-guanine-xanthine phosphoribosyltransferase (183 aa).

GMP is bound by residues 102-110, Lys-134, and Asp-163; that span reads EDIIDTGLT. Residue Asp-106 is the Proton acceptor of the active site. A Mg(2+)-binding site is contributed by Asp-163.

In terms of assembly, homodimer. Requires Mg(2+) as cofactor.

The protein resides in the cytoplasm. It carries out the reaction IMP + diphosphate = hypoxanthine + 5-phospho-alpha-D-ribose 1-diphosphate. The enzyme catalyses GMP + diphosphate = guanine + 5-phospho-alpha-D-ribose 1-diphosphate. The catalysed reaction is XMP + diphosphate = xanthine + 5-phospho-alpha-D-ribose 1-diphosphate. It participates in purine metabolism; GMP biosynthesis via salvage pathway; GMP from guanine: step 1/1. It functions in the pathway purine metabolism; IMP biosynthesis via salvage pathway; IMP from hypoxanthine: step 1/1. The protein operates within purine metabolism; XMP biosynthesis via salvage pathway; XMP from xanthine: step 1/1. Functionally, essential in nucleic acid metabolism of T.foetus because the parasite is unable to synthesize purine nucleotides de novo and relies on the HGXPRTase activities for its purine requirements by salvaging purine bases from the host. Works with guanine, hypoxanthine and xanthine. The polypeptide is Hypoxanthine-guanine-xanthine phosphoribosyltransferase (HPT) (Tritrichomonas foetus (Trichomonas foetus)).